Here is a 308-residue protein sequence, read N- to C-terminus: Ribosomal RNA small subunit methyltransferase H (308 aa).

S-adenosyl-L-methionine-binding positions include 35 to 37 (GGH), Asp-55, Phe-79, Asp-100, and Gln-107.

Belongs to the methyltransferase superfamily. RsmH family.

It is found in the cytoplasm. It catalyses the reaction cytidine(1402) in 16S rRNA + S-adenosyl-L-methionine = N(4)-methylcytidine(1402) in 16S rRNA + S-adenosyl-L-homocysteine + H(+). Specifically methylates the N4 position of cytidine in position 1402 (C1402) of 16S rRNA. This is Ribosomal RNA small subunit methyltransferase H from Dechloromonas aromatica (strain RCB).